The chain runs to 216 residues: RNA pyrophosphohydrolase (216 aa).

The Nudix hydrolase domain maps to 6-149; sequence GFRPNVGIIL…KRDVYQLALT (144 aa). A Nudix box motif is present at residues 38–59; that stretch reads GGIKYGETPMQAMYRELHEETG.

The protein belongs to the Nudix hydrolase family. RppH subfamily. It depends on a divalent metal cation as a cofactor.

Functionally, accelerates the degradation of transcripts by removing pyrophosphate from the 5'-end of triphosphorylated RNA, leading to a more labile monophosphorylated state that can stimulate subsequent ribonuclease cleavage. The sequence is that of RNA pyrophosphohydrolase from Burkholderia ambifaria (strain MC40-6).